The following is a 149-amino-acid chain: Ribonuclease pancreatic (149 aa).

An N-terminal signal peptide occupies residues 1–25 (MGLEKSFILFSLLVLVLGWVQPSLG). Residues lysine 32 and arginine 35 each contribute to the substrate site. Residue histidine 37 is the Proton acceptor of the active site. Disulfide bonds link cysteine 51-cysteine 109, cysteine 65-cysteine 120, cysteine 83-cysteine 135, and cysteine 90-cysteine 97. Residues 66–70 (KPVNT), lysine 91, and arginine 110 contribute to the substrate site. Histidine 144 functions as the Proton donor in the catalytic mechanism.

This sequence belongs to the pancreatic ribonuclease family. As to quaternary structure, monomer. Interacts with and forms tight 1:1 complexes with RNH1. Dimerization of two such complexes may occur. Interaction with RNH1 inhibits this protein. Pancreas.

It localises to the secreted. It catalyses the reaction an [RNA] containing cytidine + H2O = an [RNA]-3'-cytidine-3'-phosphate + a 5'-hydroxy-ribonucleotide-3'-[RNA].. The catalysed reaction is an [RNA] containing uridine + H2O = an [RNA]-3'-uridine-3'-phosphate + a 5'-hydroxy-ribonucleotide-3'-[RNA].. In terms of biological role, endonuclease that catalyzes the cleavage of RNA on the 3' side of pyrimidine nucleotides. Acts on single-stranded and double-stranded RNA. The polypeptide is Ribonuclease pancreatic (RNASE1) (Leopoldamys edwardsi (Edwards's long-tailed giant rat)).